Consider the following 414-residue polypeptide: ZP domain-containing protein (414 aa).

An N-terminal signal peptide occupies residues 1-17 (MFLYSFVFLMLLGLSSA). Residues 18 to 65 (QTESATSPDEVETEPTMSTDQPETSPSMSTETEPTTETPPVTTPPPPD) are disordered. Over 18–364 (QTESATSPDE…GAQEAVSSLT (347 aa)) the chain is Extracellular. A compositionally biased stretch (low complexity) spans 39–57 (PETSPSMSTETEPTTETPP). In terms of domain architecture, ZP spans 70 to 323 (ICTNEKMEVF…SRCAKGCETS (254 aa)). Cysteines 241 and 302 form a disulfide. The chain crosses the membrane as a helical span at residues 365–385 (IFAAVAGVLGVIVLFLAVALV). Topologically, residues 386 to 414 (MLYKRYRSPQSATRVVYTKTANEEGKLLV) are cytoplasmic.

As to expression, component of the acid-insoluble and acid-soluble organic matrix of the aragonitic skeleton (at protein level).

It localises to the membrane. The protein is ZP domain-containing protein of Acropora millepora (Staghorn coral).